The primary structure comprises 218 residues: GILT-like protein ZK669.3 (218 aa).

The N-terminal stretch at 1 to 21 (MRRLNGVFICLILFITKISYA) is a signal peptide. Asn-129 and Asn-185 each carry an N-linked (GlcNAc...) asparagine glycan.

Belongs to the GILT family.

It is found in the secreted. This is GILT-like protein ZK669.3 from Caenorhabditis elegans.